A 234-amino-acid polypeptide reads, in one-letter code: MKFSFVSLFPNLMEFYFKDSILARAKEKKLFKLNFYNPRDFSKNSYHKVDDYKIGGGAGLLIQAEPMYEVLRSIQEKKENPYFIFLNPSGKTFNQKDAKRLSKKEHIVFVCGRYEGIDERVLEIFANEVFSIGDFILTGGELPALVMCDAILRNVNGVLGNMESLEEESFENNLFEAPAFSKPFIFEKKNKKFYTPSEFLKGNHARIASLKTTLASCKTKFFRPDLFLEHERKK.

S-adenosyl-L-methionine-binding positions include Gly112 and 132-137; that span reads IGDFIL.

The protein belongs to the RNA methyltransferase TrmD family. In terms of assembly, homodimer.

Its subcellular location is the cytoplasm. The catalysed reaction is guanosine(37) in tRNA + S-adenosyl-L-methionine = N(1)-methylguanosine(37) in tRNA + S-adenosyl-L-homocysteine + H(+). In terms of biological role, specifically methylates guanosine-37 in various tRNAs. The protein is tRNA (guanine-N(1)-)-methyltransferase of Campylobacter jejuni subsp. doylei (strain ATCC BAA-1458 / RM4099 / 269.97).